The chain runs to 294 residues: ATP synthase gamma chain (294 aa).

Belongs to the ATPase gamma chain family. In terms of assembly, F-type ATPases have 2 components, CF(1) - the catalytic core - and CF(0) - the membrane proton channel. CF(1) has five subunits: alpha(3), beta(3), gamma(1), delta(1), epsilon(1). CF(0) has three main subunits: a, b and c.

It is found in the cell inner membrane. Produces ATP from ADP in the presence of a proton gradient across the membrane. The gamma chain is believed to be important in regulating ATPase activity and the flow of protons through the CF(0) complex. This Campylobacter jejuni subsp. doylei (strain ATCC BAA-1458 / RM4099 / 269.97) protein is ATP synthase gamma chain.